A 354-amino-acid polypeptide reads, in one-letter code: Multiple sugar-binding periplasmic receptor ChvE (354 aa).

A signal peptide spans 1 to 25 (MKSIISLTAAAAIGVAMFVAPAFAA).

It belongs to the bacterial solute-binding protein 2 family.

It localises to the periplasm. In terms of biological role, required for effective transcriptional induction of the vir genes by monosaccharides in response to plant signals and for normal growth and chemotaxis towards certain sugars. Functions as a periplasmic multiple sugar-binding receptor protein. It does not interact with a transport system. In Rhizobium radiobacter (Agrobacterium tumefaciens), this protein is Multiple sugar-binding periplasmic receptor ChvE (chvE).